The following is a 713-amino-acid chain: MARSTPIERYRNFGIMAHIDAGKTTTSERILFYTGKSHKIGEVHDGAATMDWMEQEQERGITIQSAATTAFWKGMDKSLPEHRFNIIDTPGHVDFTIEVERSLRVLDGAVFVLCAVGGVQPQSETVWRQANKYHVPRIAFVNKMDRTGANFQKVVGQLKAKLGAVAVPMQLPIGAEDNFKGVVDLLKMKAIHWDEASQGMKFEYSDIPADLQAAAEEARQFMVETAAEASEELMEKYLGGEELAEAEIINALRTRTLATEIVPMYCGSAFKNKGVQAMLDGVIQLLPSPVDVPDVKGVDVDDDTVEMTRKSDDKAPFSSLAFKIITDPFVGALTFFRVYSGTLNGGDTVLNSVKGKKERIGRILQMHSNNREEIKEVLAGDIAAAVGLKDTTTGDTLCAVDAPIILERMTFPEPVISMAVEPKTKSDQEKMGLALGRLAQEDPSFRVKTDEESGQTIISGMGELHLDIIVDRLKREFNVEANVGAPQVAYRETITLADVKSDYKHAKQSGGKGQYGHVVIELSPITAADRADPKLAPAIKDDFLFINDITGGVIPKEFIPSVEKGLRETITSGPLAGFPVVDVKVKLVFGSYHDVDSSEMAFKLASSMAFKQGFAKAKPVLLEPIMKVEIVTPEDYQGDVMGDVSRRRGVLQGSDTTGDGSASIINAMIPLGEMFGYATALRSQTQGRATFTMEFDHYEPAPTNIAEAVMKKG.

A tr-type G domain is found at 8–290 (ERYRNFGIMA…GVIQLLPSPV (283 aa)). GTP-binding positions include 17 to 24 (AHIDAGKT), 88 to 92 (DTPGH), and 142 to 145 (NKMD).

This sequence belongs to the TRAFAC class translation factor GTPase superfamily. Classic translation factor GTPase family. EF-G/EF-2 subfamily.

It localises to the cytoplasm. Its function is as follows. Catalyzes the GTP-dependent ribosomal translocation step during translation elongation. During this step, the ribosome changes from the pre-translocational (PRE) to the post-translocational (POST) state as the newly formed A-site-bound peptidyl-tRNA and P-site-bound deacylated tRNA move to the P and E sites, respectively. Catalyzes the coordinated movement of the two tRNA molecules, the mRNA and conformational changes in the ribosome. This is Elongation factor G from Stenotrophomonas maltophilia (strain K279a).